Reading from the N-terminus, the 245-residue chain is Small ribosomal subunit protein uS2 (245 aa).

Belongs to the universal ribosomal protein uS2 family.

The protein is Small ribosomal subunit protein uS2 of Dehalococcoides mccartyi (strain ATCC BAA-2266 / KCTC 15142 / 195) (Dehalococcoides ethenogenes (strain 195)).